Consider the following 1324-residue polypeptide: Coiled-coil domain-containing protein 171 (1324 aa).

5 coiled-coil regions span residues 29–296 (KNET…RAAH), 325–393 (AEAV…RLQY), 453–521 (FSVV…KCAD), 599–712 (SELC…VREN), and 981–1145 (FTQR…KECV). Residues 1301–1312 (PHSLSSQSSPGV) show a composition bias toward polar residues. The disordered stretch occupies residues 1301–1324 (PHSLSSQSSPGVPTNAKRPSQIGL).

The protein is Coiled-coil domain-containing protein 171 (Ccdc171) of Mus musculus (Mouse).